The primary structure comprises 374 residues: MSLQFGPEYVRAIAPYVTGKPISEVAREFGLEAARIVKLASNENPLGMPASARVAMTAAIDGLARYPDANGFSLKAALHAKFGVPEAWITLGNGSNDILELAARALVAPGQGVIYAQHAFAVYALAAQEVGARAVEVPARDYGHDLDAMAAAITPDTRLIYVANPNNPTGTFLPADAVAAFLAKVPPTVVVVLDEAYNEFLKPEQQYDSIAWVRRYPNLLVSRTFSKAYGLAGLRVGYGIAQPQLTALLNRIRQPFNVNSLAQAAAVAALSDTEFLRRSAELNAAGYAQLTQAFARLGLEYVPSSGNFVLVRVGDDADAGARVNLALLRQGVIVRPVGNYGLPQWLRISIGLPEENAACIAALESALAQAEAAA.

Lys227 bears the N6-(pyridoxal phosphate)lysine mark.

The protein belongs to the class-II pyridoxal-phosphate-dependent aminotransferase family. Histidinol-phosphate aminotransferase subfamily. In terms of assembly, homodimer. Pyridoxal 5'-phosphate is required as a cofactor.

It catalyses the reaction L-histidinol phosphate + 2-oxoglutarate = 3-(imidazol-4-yl)-2-oxopropyl phosphate + L-glutamate. Its pathway is amino-acid biosynthesis; L-histidine biosynthesis; L-histidine from 5-phospho-alpha-D-ribose 1-diphosphate: step 7/9. This chain is Histidinol-phosphate aminotransferase 2 (hisC2), found in Ralstonia nicotianae (strain ATCC BAA-1114 / GMI1000) (Ralstonia solanacearum).